We begin with the raw amino-acid sequence, 177 residues long: Large ribosomal subunit protein uL6 (177 aa).

The protein belongs to the universal ribosomal protein uL6 family. As to quaternary structure, part of the 50S ribosomal subunit.

This protein binds to the 23S rRNA, and is important in its secondary structure. It is located near the subunit interface in the base of the L7/L12 stalk, and near the tRNA binding site of the peptidyltransferase center. The sequence is that of Large ribosomal subunit protein uL6 from Haemophilus ducreyi (strain 35000HP / ATCC 700724).